Consider the following 307-residue polypeptide: tRNA N(3)-methylcytidine methyltransferase trm140 (307 aa).

7 residues coordinate S-adenosyl-L-methionine: tryptophan 83, tyrosine 87, glycine 125, aspartate 150, aspartate 176, leucine 177, and isoleucine 197.

Belongs to the methyltransferase superfamily. METL family.

The enzyme catalyses cytidine(32) in tRNA(Thr) + S-adenosyl-L-methionine = N(3)-methylcytidine(32) in tRNA(Thr) + S-adenosyl-L-homocysteine + H(+). Functionally, S-adenosyl-L-methionine-dependent methyltransferase that mediates N(3)-methylcytidine modification of residue 32 of the tRNA anticodon loop of tRNA(Thr). Does not catalyze N(3)-methylcytidine modification of tRNA(Ser). This chain is tRNA N(3)-methylcytidine methyltransferase trm140, found in Schizosaccharomyces pombe (strain 972 / ATCC 24843) (Fission yeast).